An 81-amino-acid polypeptide reads, in one-letter code: Photosystem I iron-sulfur center (81 aa).

4Fe-4S ferredoxin-type domains follow at residues 2-31 (SHSV…MIPW) and 39-68 (IASA…VRVY). Residues C11, C14, C17, C21, C48, C51, C54, and C58 each contribute to the [4Fe-4S] cluster site.

The eukaryotic PSI reaction center is composed of at least 11 subunits. Requires [4Fe-4S] cluster as cofactor.

It localises to the plastid. It is found in the chloroplast thylakoid membrane. It catalyses the reaction reduced [plastocyanin] + hnu + oxidized [2Fe-2S]-[ferredoxin] = oxidized [plastocyanin] + reduced [2Fe-2S]-[ferredoxin]. Apoprotein for the two 4Fe-4S centers FA and FB of photosystem I (PSI); essential for photochemical activity. FB is the terminal electron acceptor of PSI, donating electrons to ferredoxin. The C-terminus interacts with PsaA/B/D and helps assemble the protein into the PSI complex. Required for binding of PsaD and PsaE to PSI. PSI is a plastocyanin-ferredoxin oxidoreductase, converting photonic excitation into a charge separation, which transfers an electron from the donor P700 chlorophyll pair to the spectroscopically characterized acceptors A0, A1, FX, FA and FB in turn. This Triticum aestivum (Wheat) protein is Photosystem I iron-sulfur center.